A 155-amino-acid polypeptide reads, in one-letter code: Calmodulin, flagellar (155 aa).

EF-hand domains are found at residues 14–49 (EQIAEFKEAFSLFDKDGDGTITTSELGTVMRSLGQN), 50–85 (PTEAELHDMINEVDADGNGTIDFTEFLTMMAKKMKD), 87–122 (DNEEEIKEAFKVFDKDGNGFISAQELRHVMCNLGEK), and 123–155 (LTDEEVDEMIREADIDGDNQINYTEFVKMMMQK). Asp-27, Asp-29, Asp-31, Thr-33, Glu-38, Asp-63, Asp-65, Asn-67, Thr-69, Glu-74, Asp-100, Asp-102, Asn-104, Glu-111, Asp-136, Asp-138, Asp-140, Gln-142, and Glu-147 together coordinate Ca(2+).

The protein belongs to the calmodulin family.

The protein localises to the cell projection. Its subcellular location is the cilium. It localises to the flagellum. Calmodulin mediates the control of a large number of enzymes, ion channels and other proteins by Ca(2+). Among the enzymes to be stimulated by the calmodulin-Ca(2+) complex are a number of protein kinases and phosphatases. This chain is Calmodulin, flagellar (CAM1), found in Naegleria gruberi (Amoeba).